We begin with the raw amino-acid sequence, 154 residues long: Small ribosomal subunit protein uS11c (154 aa).

This sequence belongs to the universal ribosomal protein uS11 family. Part of the 30S ribosomal subunit.

It is found in the plastid. This Helicosporidium sp. subsp. Simulium jonesii (Green alga) protein is Small ribosomal subunit protein uS11c.